A 371-amino-acid chain; its full sequence is N-acetyldiaminopimelate deacetylase (371 aa).

D68 is a catalytic residue. E127 acts as the Proton acceptor in catalysis.

It belongs to the peptidase M20A family. N-acetyldiaminopimelate deacetylase subfamily.

It carries out the reaction N-acetyl-(2S,6S)-2,6-diaminopimelate + H2O = (2S,6S)-2,6-diaminopimelate + acetate. It functions in the pathway amino-acid biosynthesis; L-lysine biosynthesis via DAP pathway; LL-2,6-diaminopimelate from (S)-tetrahydrodipicolinate (acetylase route): step 3/3. Catalyzes the conversion of N-acetyl-diaminopimelate to diaminopimelate and acetate. In Halalkalibacterium halodurans (strain ATCC BAA-125 / DSM 18197 / FERM 7344 / JCM 9153 / C-125) (Bacillus halodurans), this protein is N-acetyldiaminopimelate deacetylase.